The sequence spans 158 residues: Cyclic pyranopterin monophosphate synthase (158 aa).

Substrate-binding positions include 73–75 (LCH) and 110–111 (ME). Residue Asp125 is part of the active site.

The protein belongs to the MoaC family. In terms of assembly, homohexamer; trimer of dimers.

It catalyses the reaction (8S)-3',8-cyclo-7,8-dihydroguanosine 5'-triphosphate = cyclic pyranopterin phosphate + diphosphate. Its pathway is cofactor biosynthesis; molybdopterin biosynthesis. Its function is as follows. Catalyzes the conversion of (8S)-3',8-cyclo-7,8-dihydroguanosine 5'-triphosphate to cyclic pyranopterin monophosphate (cPMP). In Ectopseudomonas mendocina (strain ymp) (Pseudomonas mendocina), this protein is Cyclic pyranopterin monophosphate synthase.